Consider the following 343-residue polypeptide: GTPase Obg (343 aa).

The 158-residue stretch at 1–158 (MFIDEAKIRV…FTLRLELKVL (158 aa)) folds into the Obg domain. A disordered region spans residues 121–140 (RGGRGNQHFATSTHQAPREH). Residues 159-333 (ADIGIVGYPN…LKYAMAERVR (175 aa)) form the OBG-type G domain. GTP is bound by residues 165 to 172 (GYPNVGKS), 190 to 194 (FTTLE), 215 to 218 (DIPG), 286 to 289 (SKID), and 314 to 316 (SAV). Residues Ser-172 and Thr-192 each coordinate Mg(2+).

This sequence belongs to the TRAFAC class OBG-HflX-like GTPase superfamily. OBG GTPase family. In terms of assembly, monomer. Mg(2+) is required as a cofactor.

Its subcellular location is the cytoplasm. Its function is as follows. An essential GTPase which binds GTP, GDP and possibly (p)ppGpp with moderate affinity, with high nucleotide exchange rates and a fairly low GTP hydrolysis rate. Plays a role in control of the cell cycle, stress response, ribosome biogenesis and in those bacteria that undergo differentiation, in morphogenesis control. This chain is GTPase Obg, found in Acidobacterium capsulatum (strain ATCC 51196 / DSM 11244 / BCRC 80197 / JCM 7670 / NBRC 15755 / NCIMB 13165 / 161).